The chain runs to 186 residues: Putative manganese efflux pump MntP (186 aa).

Helical transmembrane passes span 5–25 (VLIG…MDAF), 41–61 (VFQI…GGMI), 72–92 (ALAG…MIVA), 107–127 (FGLF…GLSL), 135–155 (ILTI…GLLL), and 166–186 (YSEA…LLPI).

The protein belongs to the MntP (TC 9.B.29) family.

It localises to the cell membrane. Its function is as follows. Probably functions as a manganese efflux pump. The chain is Putative manganese efflux pump MntP from Bacillus licheniformis (strain ATCC 14580 / DSM 13 / JCM 2505 / CCUG 7422 / NBRC 12200 / NCIMB 9375 / NCTC 10341 / NRRL NRS-1264 / Gibson 46).